The sequence spans 342 residues: Ferrochelatase (342 aa).

Fe cation contacts are provided by His188 and Glu268.

It belongs to the ferrochelatase family.

Its subcellular location is the cytoplasm. It catalyses the reaction heme b + 2 H(+) = protoporphyrin IX + Fe(2+). It participates in porphyrin-containing compound metabolism; protoheme biosynthesis; protoheme from protoporphyrin-IX: step 1/1. Its function is as follows. Catalyzes the ferrous insertion into protoporphyrin IX. This Rickettsia typhi (strain ATCC VR-144 / Wilmington) protein is Ferrochelatase.